Reading from the N-terminus, the 506-residue chain is Maturase K (506 aa).

The protein belongs to the intron maturase 2 family. MatK subfamily.

Its subcellular location is the plastid. It is found in the chloroplast. Functionally, usually encoded in the trnK tRNA gene intron. Probably assists in splicing its own and other chloroplast group II introns. The protein is Maturase K of Phyllodoce caerulea (Blue mountain heath).